The sequence spans 270 residues: uncharacterized protein (270 aa).

A divalent metal cation-binding residues include D53, H55, D83, N116, H207, and H209.

Belongs to the metallophosphoesterase superfamily. It depends on a divalent metal cation as a cofactor.

This is an uncharacterized protein from Bacillus subtilis (strain 168).